An 896-amino-acid chain; its full sequence is Translation initiation factor IF-2 (896 aa).

2 disordered regions span residues 32-99 and 117-304; these read LAQA…TALP and EITS…KQAE. A compositionally biased stretch (polar residues) spans 35-48; it reads AGSSDTKNSPASKA. Residues 153-169 show a composition bias toward basic and acidic residues; that stretch reads TPERIEETPIIRTRTEP. Positions 203–214 are enriched in low complexity; the sequence is AASTEETTQQQP. Residues 215 to 227 show a composition bias toward polar residues; sequence RQNDAASHNNKQQ. The span at 228-241 shows a compositional bias: low complexity; sequence PSGTSSRPASSAPS. Over residues 256–280 the composition is skewed to basic and acidic residues; the sequence is RGSERDRSKRSDESVKAFTGRDRYG. Residues 401–570 enclose the tr-type G domain; sequence IRSPIVAFMG…ALQAEVLELK (170 aa). Residues 410 to 417 form a G1 region; that stretch reads GHVDHGKT. A GTP-binding site is contributed by 410–417; that stretch reads GHVDHGKT. The interval 435 to 439 is G2; the sequence is AITQH. Residues 456-459 form a G3 region; the sequence is DTPG. Residues 456–460 and 510–513 each bind GTP; these read DTPGH and NKCD. The segment at 510–513 is G4; sequence NKCD. Residues 546 to 548 are G5; that stretch reads SAK.

It belongs to the TRAFAC class translation factor GTPase superfamily. Classic translation factor GTPase family. IF-2 subfamily.

It is found in the cytoplasm. Its function is as follows. One of the essential components for the initiation of protein synthesis. Protects formylmethionyl-tRNA from spontaneous hydrolysis and promotes its binding to the 30S ribosomal subunits. Also involved in the hydrolysis of GTP during the formation of the 70S ribosomal complex. The sequence is that of Translation initiation factor IF-2 from Chlamydia trachomatis serovar L2 (strain ATCC VR-902B / DSM 19102 / 434/Bu).